Reading from the N-terminus, the 341-residue chain is UDP-N-acetylenolpyruvoylglucosamine reductase (341 aa).

The FAD-binding PCMH-type domain maps to 19 to 191; sequence MAVRAAHFCQ…TAVRFRLSRR (173 aa). Arg-167 is a catalytic residue. Residue Ser-241 is the Proton donor of the active site. Glu-337 is an active-site residue.

It belongs to the MurB family. It depends on FAD as a cofactor.

It localises to the cytoplasm. The catalysed reaction is UDP-N-acetyl-alpha-D-muramate + NADP(+) = UDP-N-acetyl-3-O-(1-carboxyvinyl)-alpha-D-glucosamine + NADPH + H(+). The protein operates within cell wall biogenesis; peptidoglycan biosynthesis. Cell wall formation. This chain is UDP-N-acetylenolpyruvoylglucosamine reductase, found in Chromobacterium violaceum (strain ATCC 12472 / DSM 30191 / JCM 1249 / CCUG 213 / NBRC 12614 / NCIMB 9131 / NCTC 9757 / MK).